The following is a 210-amino-acid chain: Cilia- and flagella-associated protein 418 (210 aa).

Residues 1–77 (MAKDLDELLD…LINEIFEEPN (77 aa)) form a required for interaction with FAM161A region. Residues 24-59 (LDLGERPKGGSGGGGTHSGDRNGAQEKDTLRSTETF) form a disordered region. A compositionally biased stretch (basic and acidic residues) spans 41-59 (SGDRNGAQEKDTLRSTETF).

Interacts (via N-terminus) with FAM161A (via central region); the interaction is direct.

The protein resides in the cytoplasm. It is found in the photoreceptor inner segment. May be involved in photoreceptor outer segment disk morphogenesis. This chain is Cilia- and flagella-associated protein 418, found in Rattus norvegicus (Rat).